Here is an 830-residue protein sequence, read N- to C-terminus: Probable glucan 1,3-beta-glucosidase D (830 aa).

2 stretches are compositionally biased toward basic and acidic residues: residues 1 to 11 (MPGHSRSRDRL) and 74 to 84 (VHEHDHDHEYD). Disordered regions lie at residues 1-91 (MPGH…EEPW), 127-163 (MSGA…QRRK), and 260-297 (GGPG…STSA). At 1 to 307 (MPGHSRSRDR…RPSFWKRYHK (307 aa)) the chain is on the cytoplasmic side. The segment covering 147-163 (GKGKKRLDRETRRQRRK) has biased composition (basic residues). A helical; Signal-anchor for type II membrane protein transmembrane segment spans residues 308–328 (TFIFFAILIVLAAIAIPVGII). Residues 329 to 830 (EARRLHGTSG…PSFGNLPEYY (502 aa)) are Extracellular-facing. N341, N376, N381, N393, N397, N546, and N558 each carry an N-linked (GlcNAc...) asparagine glycan. Catalysis depends on E597, which acts as the Proton donor. N610, N669, and N689 each carry an N-linked (GlcNAc...) asparagine glycan. Residue E702 is the Nucleophile of the active site.

This sequence belongs to the glycosyl hydrolase 5 (cellulase A) family.

The protein localises to the cell membrane. The enzyme catalyses Successive hydrolysis of beta-D-glucose units from the non-reducing ends of (1-&gt;3)-beta-D-glucans, releasing alpha-glucose.. Its function is as follows. Glucosidase involved in the degradation of cellulosic biomass. Active on lichenan. The sequence is that of Probable glucan 1,3-beta-glucosidase D (exgD) from Aspergillus niger (strain ATCC MYA-4892 / CBS 513.88 / FGSC A1513).